The sequence spans 493 residues: Ketol-acid reductoisomerase (NADP(+)) (493 aa).

The region spanning 14–208 (LDQLGRCRFM…GGDRAGVLES (195 aa)) is the KARI N-terminal Rossmann domain. NADP(+)-binding positions include 45-48 (CGAQ), R68, R76, S78, and 108-110 (DKQ). H132 is an active-site residue. G158 provides a ligand contact to NADP(+). 2 KARI C-terminal knotted domains span residues 209–345 (SFVA…APKA) and 346–486 (DGIK…MTDM). Mg(2+)-binding residues include D217, E221, E390, and E394. S415 lines the substrate pocket.

It belongs to the ketol-acid reductoisomerase family. Mg(2+) is required as a cofactor.

It carries out the reaction (2R)-2,3-dihydroxy-3-methylbutanoate + NADP(+) = (2S)-2-acetolactate + NADPH + H(+). The catalysed reaction is (2R,3R)-2,3-dihydroxy-3-methylpentanoate + NADP(+) = (S)-2-ethyl-2-hydroxy-3-oxobutanoate + NADPH + H(+). Its pathway is amino-acid biosynthesis; L-isoleucine biosynthesis; L-isoleucine from 2-oxobutanoate: step 2/4. It functions in the pathway amino-acid biosynthesis; L-valine biosynthesis; L-valine from pyruvate: step 2/4. In terms of biological role, involved in the biosynthesis of branched-chain amino acids (BCAA). Catalyzes an alkyl-migration followed by a ketol-acid reduction of (S)-2-acetolactate (S2AL) to yield (R)-2,3-dihydroxy-isovalerate. In the isomerase reaction, S2AL is rearranged via a Mg-dependent methyl migration to produce 3-hydroxy-3-methyl-2-ketobutyrate (HMKB). In the reductase reaction, this 2-ketoacid undergoes a metal-dependent reduction by NADPH to yield (R)-2,3-dihydroxy-isovalerate. The protein is Ketol-acid reductoisomerase (NADP(+)) of Mannheimia succiniciproducens (strain KCTC 0769BP / MBEL55E).